We begin with the raw amino-acid sequence, 346 residues long: Ferredoxin--NADP reductase 1 (346 aa).

Positions 37, 45, 49, 89, 124, 287, and 328 each coordinate FAD.

This sequence belongs to the ferredoxin--NADP reductase type 2 family. Homodimer. The cofactor is FAD.

The enzyme catalyses 2 reduced [2Fe-2S]-[ferredoxin] + NADP(+) + H(+) = 2 oxidized [2Fe-2S]-[ferredoxin] + NADPH. The chain is Ferredoxin--NADP reductase 1 from Bacillus pumilus (strain SAFR-032).